Reading from the N-terminus, the 299-residue chain is Ribosomal RNA small subunit methyltransferase H (299 aa).

S-adenosyl-L-methionine is bound by residues 36-38, D55, D103, and Q110; that span reads GGH. Composition is skewed to basic and acidic residues over residues 268–282 and 289–299; these read KPVR…ENPR and RAAERIEKGGD. Residues 268–299 form a disordered region; that stretch reads KPVRPSEEEIRENPRARSGRLRAAERIEKGGD.

Belongs to the methyltransferase superfamily. RsmH family.

Its subcellular location is the cytoplasm. It catalyses the reaction cytidine(1402) in 16S rRNA + S-adenosyl-L-methionine = N(4)-methylcytidine(1402) in 16S rRNA + S-adenosyl-L-homocysteine + H(+). Specifically methylates the N4 position of cytidine in position 1402 (C1402) of 16S rRNA. This Thermotoga sp. (strain RQ2) protein is Ribosomal RNA small subunit methyltransferase H.